The chain runs to 501 residues: MSSSGMPDLPAPLTNIKIQHTKLFINNEWHESVSGKTFPVFNPATEEKICEVEEADKEDVDKAVKAAREAFQMGSPWRTMDASERGQLIYKLADLIERDRLLLATLESINAGKVFASAYLMDLDYCIKALRYCAGWADKIQGRTIPVDGEFFSYTRHEPIGVCGLIFPWNAPMILLACKIGPALCCGNTVIVKPAEQTPLTALHVASLIKEAGFPPGVVNIVPGYGPTAGAAISSHMDVDKVAFTGSTEVGKMIQEAAAKSNLKRVTLELGAKNPCIVFADADLDSAVEFAHQGVFTNQGQSCIAASKLFVEEAIYDEFVQRSVERAKKYVFGNPLTPGVNHGPQINKAQHNKIMELIESGKKEGAKLECGGGPWGNKGYFIQPTVFSNVTDDMRIAKEEIFGPVQQIMKFKSLDEVIKRANNTYYGLVAGVFTKDLDKAVTVSSALQAGTVWVNCYLAASAQSPAGGFKMSGHGREMGEYGIHEYTEVKTVTMKISEKNS.

246 to 251 lines the NAD(+) pocket; sequence GSTEVG. E269 functions as the Proton acceptor in the catalytic mechanism. C303 serves as the catalytic Nucleophile.

The protein belongs to the aldehyde dehydrogenase family. In terms of assembly, homotetramer. In terms of tissue distribution, eye specific, with very high expression in the lens.

It is found in the cytoplasm. It catalyses the reaction an aldehyde + NAD(+) + H2O = a carboxylate + NADH + 2 H(+). The protein operates within alcohol metabolism; ethanol degradation; acetate from ethanol: step 2/2. Major component of the eye of elephant shrews, which in contrast to other mammals, possesses both a lens- and a non-lens class-1 aldehyde dehydrogenase 1. This eye-specific form is a structural protein of the lens and, in other part of the eye, serves as the major form of ALDH1. Can convert/oxidize retinaldehyde to retinoic acid. In Elephantulus edwardii (Cape long-eared elephant shrew), this protein is Aldehyde dehydrogenase, cytosolic 1 (ALDH1).